The chain runs to 264 residues: Taurine import ATP-binding protein TauB (264 aa).

One can recognise an ABC transporter domain in the interval 4 to 233; the sequence is LQLERISAQY…RYAAGESARA (230 aa). 38–45 contacts ATP; sequence GPSGSGKT.

It belongs to the ABC transporter superfamily. Taurine importer (TC 3.A.1.17.1) family. The complex is composed of two ATP-binding proteins (TauB), two transmembrane proteins (TauC) and a solute-binding protein (TauA).

It is found in the cell inner membrane. The catalysed reaction is taurine(out) + ATP + H2O = taurine(in) + ADP + phosphate + H(+). In terms of biological role, part of the ABC transporter complex TauABC involved in taurine import. Responsible for energy coupling to the transport system. The polypeptide is Taurine import ATP-binding protein TauB (Pseudomonas fluorescens (strain ATCC BAA-477 / NRRL B-23932 / Pf-5)).